The primary structure comprises 75 residues: Small ribosomal subunit protein bS18 (75 aa).

This sequence belongs to the bacterial ribosomal protein bS18 family. Part of the 30S ribosomal subunit. Forms a tight heterodimer with protein bS6.

In terms of biological role, binds as a heterodimer with protein bS6 to the central domain of the 16S rRNA, where it helps stabilize the platform of the 30S subunit. The polypeptide is Small ribosomal subunit protein bS18 (Psychrobacter sp. (strain PRwf-1)).